Consider the following 485-residue polypeptide: D-alanine--D-alanyl carrier protein ligase (485 aa).

144 to 145 (TS) serves as a coordination point for ATP. Asp-189 is a binding site for D-alanine. Position 284 to 289 (284 to 289 (NTYGPT)) interacts with ATP. Val-293 contacts D-alanine. ATP-binding residues include Asp-365 and Lys-473. A D-alanine-binding site is contributed by Lys-473.

Belongs to the ATP-dependent AMP-binding enzyme family. DltA subfamily.

Its subcellular location is the cytoplasm. It catalyses the reaction holo-[D-alanyl-carrier protein] + D-alanine + ATP = D-alanyl-[D-alanyl-carrier protein] + AMP + diphosphate. Its pathway is cell wall biogenesis; lipoteichoic acid biosynthesis. Its function is as follows. Catalyzes the first step in the D-alanylation of lipoteichoic acid (LTA), the activation of D-alanine and its transfer onto the D-alanyl carrier protein (Dcp) DltC. In an ATP-dependent two-step reaction, forms a high energy D-alanyl-AMP intermediate, followed by transfer of the D-alanyl residue as a thiol ester to the phosphopantheinyl prosthetic group of the Dcp. D-alanylation of LTA plays an important role in modulating the properties of the cell wall in Gram-positive bacteria, influencing the net charge of the cell wall. The chain is D-alanine--D-alanyl carrier protein ligase from Staphylococcus aureus (strain Mu3 / ATCC 700698).